The sequence spans 226 residues: 7-cyano-7-deazaguanine synthase (226 aa).

9–19 (YSGGLDSTTCL) contributes to the ATP binding site. Positions 189, 199, 202, and 205 each coordinate Zn(2+).

The protein belongs to the QueC family. The cofactor is Zn(2+).

It catalyses the reaction 7-carboxy-7-deazaguanine + NH4(+) + ATP = 7-cyano-7-deazaguanine + ADP + phosphate + H2O + H(+). It participates in purine metabolism; 7-cyano-7-deazaguanine biosynthesis. Its function is as follows. Catalyzes the ATP-dependent conversion of 7-carboxy-7-deazaguanine (CDG) to 7-cyano-7-deazaguanine (preQ(0)). The sequence is that of 7-cyano-7-deazaguanine synthase from Pelobacter propionicus (strain DSM 2379 / NBRC 103807 / OttBd1).